We begin with the raw amino-acid sequence, 393 residues long: MALQPASGARDLLPRDVGVNRWIAEQLAAVYQRWGYEEVTPPSLERIDTLEAGGAIQSHQVVQVVADEALGLRPEMTASIARAACTRLAAMQRPLRLHYRGSTFQAQRAEDQGLRIVEDLQSGVELMGAKGLAGDAELLRLLLDAGSHLPLSAEHQPTLLIGHQRLLSVLLEAVEPSLRSTVRRHVCGLNRVALSQLELPGQQRLQLLQLLQLRGEPAAVLNGLEALLGATDLLAELKQLISIIEEQASRAGIRLQLDPTFHPDFELYDGVMVKLVCQGLDAPVAIASGGRYDALVQRFSPVGAVASGVGFSFAVEAVRQLLEQADQLPPRLDGQLVLVAYSQSSQLHPALNLLEQLHQSGQPAELWPEPCANQDEAQGIATQRGVQTVRWVG.

This sequence belongs to the class-II aminoacyl-tRNA synthetase family. HisZ subfamily. Heteromultimer composed of HisG and HisZ subunits.

It localises to the cytoplasm. Its pathway is amino-acid biosynthesis; L-histidine biosynthesis; L-histidine from 5-phospho-alpha-D-ribose 1-diphosphate: step 1/9. In terms of biological role, required for the first step of histidine biosynthesis. May allow the feedback regulation of ATP phosphoribosyltransferase activity by histidine. The protein is ATP phosphoribosyltransferase regulatory subunit of Synechococcus sp. (strain RCC307).